Reading from the N-terminus, the 113-residue chain is Nucleoid-associated protein Csac_1593 (113 aa).

Belongs to the YbaB/EbfC family. As to quaternary structure, homodimer.

The protein resides in the cytoplasm. Its subcellular location is the nucleoid. Functionally, binds to DNA and alters its conformation. May be involved in regulation of gene expression, nucleoid organization and DNA protection. This chain is Nucleoid-associated protein Csac_1593, found in Caldicellulosiruptor saccharolyticus (strain ATCC 43494 / DSM 8903 / Tp8T 6331).